The following is a 342-amino-acid chain: Phosphate acyltransferase (342 aa).

This sequence belongs to the PlsX family. As to quaternary structure, homodimer. Probably interacts with PlsY.

The protein resides in the cytoplasm. The enzyme catalyses a fatty acyl-[ACP] + phosphate = an acyl phosphate + holo-[ACP]. It functions in the pathway lipid metabolism; phospholipid metabolism. In terms of biological role, catalyzes the reversible formation of acyl-phosphate (acyl-PO(4)) from acyl-[acyl-carrier-protein] (acyl-ACP). This enzyme utilizes acyl-ACP as fatty acyl donor, but not acyl-CoA. The sequence is that of Phosphate acyltransferase from Trichormus variabilis (strain ATCC 29413 / PCC 7937) (Anabaena variabilis).